The chain runs to 253 residues: Pro-opiomelanocortin A (253 aa).

The signal sequence occupies residues 1–21 (MLCPAWLLAVAVVGVVRGVKG). Gln22 bears the Pyrrolidone carboxylic acid mark. Cystine bridges form between Cys23–Cys45 and Cys29–Cys41. N-acetylserine; in Corticotropin is present on Ser104. At Val116 the chain carries Valine amide. Residues 228–253 (QKREQWGREEGEEKRALGERKYHFQG) form a disordered region. Position 252 is a glutamine amide; partial (Gln252).

It belongs to the POMC family. Specific enzymatic cleavages at paired basic residues yield the different active peptides. In terms of processing, acetylation of beta-endorphin occurs in a tissue-specific manner. In terms of tissue distribution, C-terminal peptide 1 and C-terminal peptide 2 are detected in the anterior part of the nucleus lateralis tuberis of hypothalamus, in dorsal hypothalamus, thalamus, telencephalon, optic tectum and medulla oblongata (at protein level). Expressed in pituitary and hypothalamus of adult diploid animals, and hypothalamus of triploid and ovulated female trout.

Its subcellular location is the secreted. Its function is as follows. Stimulates the adrenal glands to release cortisol. Melanocyte-stimulating hormone alpha: Anorexigenic peptide. Increases the pigmentation of skin by increasing melanin production in melanocytes. Functionally, melanocyte-stimulating hormone beta: Increases the pigmentation of skin by increasing melanin production in melanocytes. In terms of biological role, beta-endorphin: Endogenous orexigenic opiate. Its function is as follows. Endogenous opiate. The polypeptide is Pro-opiomelanocortin A (pomca) (Oncorhynchus mykiss (Rainbow trout)).